The primary structure comprises 1038 residues: Elongation factor 3 (1038 aa).

HEAT repeat units follow at residues 93-131 (EAYL…SANK), 133-170 (STIR…VAPY), 174-211 (RCLP…VVGN), 213-249 (DIEP…TVEA), 255-287 (MEPL…LMDD), and 292-331 (QLFI…AGGS). Glutamate 406 serves as a coordination point for ADP. 2 ABC transporter domains span residues 426–654 (IFIE…YYEL) and 680–995 (IRLT…EEVT). 4 residues coordinate ADP: asparagine 716, glutamate 924, asparagine 927, and histidine 953. Residues 1012-1038 (RKEKKAKDKARKEAEARGEYYSDSDEE) are disordered. Over residues 1021–1031 (ARKEAEARGEY) the composition is skewed to basic and acidic residues.

Belongs to the ABC transporter superfamily. ABCF family. EF3 subfamily. As to quaternary structure, monomer.

The protein resides in the cytoplasm. The catalysed reaction is ATP + H2O = ADP + phosphate + H(+). Its pathway is protein biosynthesis; polypeptide chain elongation. Ribosome-dependent ATPase that functions in cytoplasmic translation elongation. Required for the ATP-dependent release of deacylated tRNA from the ribosomal E-site during protein biosynthesis. Stimulates the eEF1A-dependent binding of aminoacyl-tRNA to the ribosomal A-site, which has reduced affinity for tRNA as long as the E-site is occupied. Assists translation termination by stimulating the release of nascent protein from the ribosome by release factors. The chain is Elongation factor 3 from Phytophthora infestans (strain T30-4) (Potato late blight agent).